Consider the following 122-residue polypeptide: Large ribosomal subunit protein bL12 (122 aa).

Belongs to the bacterial ribosomal protein bL12 family. In terms of assembly, homodimer. Part of the ribosomal stalk of the 50S ribosomal subunit. Forms a multimeric L10(L12)X complex, where L10 forms an elongated spine to which 2 to 4 L12 dimers bind in a sequential fashion. Binds GTP-bound translation factors.

Functionally, forms part of the ribosomal stalk which helps the ribosome interact with GTP-bound translation factors. Is thus essential for accurate translation. This is Large ribosomal subunit protein bL12 from Staphylococcus haemolyticus (strain JCSC1435).